We begin with the raw amino-acid sequence, 126 residues long: Regulatory protein MgsR (126 aa).

An intrachain disulfide couples C13 to C16.

Belongs to the ArsC family.

The protein localises to the cytoplasm. With respect to regulation, activity is controlled at multiple levels. Regulation includes a positive autoregulatory loop on mgsR transcription and a post-translational redox-sensitive activation step by an intramolecular disulfide bond formation in response to ethanol stress. In addition, protein stability is strictly controlled by rapid proteolytic degradation by the ClpXP and ClpCP proteases. The McsB protein-arginine kinase might serve as a proteolytic adapter for the ClpX ATPase in the degradation mechanism of MgsR. Regulates transcription of a subregulon within the general stress response. Exerts positive and negative effects in response to ethanol stress. The protein is Regulatory protein MgsR of Bacillus subtilis (strain 168).